Reading from the N-terminus, the 188-residue chain is NADH-quinone oxidoreductase subunit I (188 aa).

2 consecutive 4Fe-4S ferredoxin-type domains span residues L44–A74 and R90–E119. [4Fe-4S] cluster-binding residues include C54, C57, C60, C64, C99, C102, C105, and C109. The segment at G144–P188 is disordered. Positions D176–P188 are enriched in acidic residues.

Belongs to the complex I 23 kDa subunit family. As to quaternary structure, NDH-1 is composed of 14 different subunits. Subunits NuoA, H, J, K, L, M, N constitute the membrane sector of the complex. Requires [4Fe-4S] cluster as cofactor.

Its subcellular location is the cell membrane. The enzyme catalyses a quinone + NADH + 5 H(+)(in) = a quinol + NAD(+) + 4 H(+)(out). Functionally, NDH-1 shuttles electrons from NADH, via FMN and iron-sulfur (Fe-S) centers, to quinones in the respiratory chain. The immediate electron acceptor for the enzyme in this species is believed to be ubiquinone. Couples the redox reaction to proton translocation (for every two electrons transferred, four hydrogen ions are translocated across the cytoplasmic membrane), and thus conserves the redox energy in a proton gradient. This is NADH-quinone oxidoreductase subunit I from Rhodococcus opacus (strain B4).